The chain runs to 322 residues: Glycerol-3-phosphate dehydrogenase [NAD(P)+] (322 aa).

Residues Trp-13, His-33, and Lys-99 each contribute to the NADPH site. Sn-glycerol 3-phosphate is bound by residues Lys-99, Gly-127, and Ser-129. An NADPH-binding site is contributed by Ala-131. Sn-glycerol 3-phosphate is bound by residues Lys-182, Asp-235, Ser-245, Arg-246, and Asn-247. Residue Lys-182 is the Proton acceptor of the active site. Residue Arg-246 participates in NADPH binding. Glu-272 lines the NADPH pocket.

The protein belongs to the NAD-dependent glycerol-3-phosphate dehydrogenase family.

It is found in the cytoplasm. The enzyme catalyses sn-glycerol 3-phosphate + NAD(+) = dihydroxyacetone phosphate + NADH + H(+). The catalysed reaction is sn-glycerol 3-phosphate + NADP(+) = dihydroxyacetone phosphate + NADPH + H(+). The protein operates within membrane lipid metabolism; glycerophospholipid metabolism. In terms of biological role, catalyzes the reduction of the glycolytic intermediate dihydroxyacetone phosphate (DHAP) to sn-glycerol 3-phosphate (G3P), the key precursor for phospholipid synthesis. The sequence is that of Glycerol-3-phosphate dehydrogenase [NAD(P)+] from Ruthia magnifica subsp. Calyptogena magnifica.